We begin with the raw amino-acid sequence, 497 residues long: Solute carrier family 2, facilitated glucose transporter member 6 (497 aa).

Residues 1 to 36 lie on the Cytoplasmic side of the membrane; that stretch reads MQEPLLRTEGLDYDTFPEVPATPGERERAGALKNRR. The short motif at 5 to 6 is the Dileucine internalization motif element; the sequence is LL. The chain crosses the membrane as a helical span at residues 37–57; sequence VFLATFAAVLGNFSFGYALVY. Over 58–80 the chain is Extracellular; that stretch reads TSPVIPELKLSSDPALHLDKIQA. Residues 81-101 traverse the membrane as a helical segment; that stretch reads SWFGSVFTLGAAAGGLSAMLL. Residues 102–115 lie on the Cytoplasmic side of the membrane; sequence NDLLGRKLSIMFSA. A helical transmembrane segment spans residues 116–136; the sequence is VPSAIGYAIMAGARGLWMLLL. Residues 137 to 138 lie on the Extracellular side of the membrane; it reads GR. A helical transmembrane segment spans residues 139 to 159; sequence MLTGFAGGLTAACIPVYVSEI. Topologically, residues 160–171 are cytoplasmic; the sequence is APPDVRGALGAT. A helical transmembrane segment spans residues 172–192; sequence PQLMAVFGSLSLYALGLLLPW. Gln173 provides a ligand contact to a D-hexose. Arg193 is a topological domain (extracellular). A helical membrane pass occupies residues 194–214; it reads WLAVAGEGPVLIMILLLSFMP. Residues 215-273 are Cytoplasmic-facing; the sequence is NSPRFLLSKSRDEEALQALTWLRADSEVHWEFEQIQDNVRRQSSRVSWAEAREPRVYRP. The chain crosses the membrane as a helical span at residues 274 to 294; sequence VLIAVLMRFLQQLTGITPILV. 284 to 285 is a binding site for a D-hexose; the sequence is QQ. Residues 295–312 are Extracellular-facing; the sequence is YLQTIFDNTSVVLPSQQD. Asn302 carries N-linked (GlcNAc...) asparagine glycosylation. The helical transmembrane segment at 313–333 threads the bilayer; that stretch reads AAIVGAVRLLSVLIAAVTMDL. Over 334–337 the chain is Cytoplasmic; the sequence is AGRK. A helical membrane pass occupies residues 338–358; the sequence is VLLYVSASVMFAANLTLGLYV. The Extracellular segment spans residues 359–385; sequence QFVPRPLTPNSTVEIVTLGDTAFNYLT. The N-linked (GlcNAc...) asparagine glycan is linked to Asn368. A helical transmembrane segment spans residues 386–406; sequence LIPLLATMLFIMGYAMGWGPI. The Cytoplasmic portion of the chain corresponds to 407-425; the sequence is TWLLMSEVLPLRARGVASG. A D-hexose is bound at residue Trp408. A helical transmembrane segment spans residues 426–446; it reads LCVLVSWLTAFVLTNYFLLAV. Position 447 (Asn447) is a topological domain, extracellular. A helical transmembrane segment spans residues 448–468; the sequence is AFGLQVPFFFFSAICLLSLLF. Topologically, residues 469–497 are cytoplasmic; sequence TGCCVPETRGRSLEQIEAFFHTRRMSFRP.

It belongs to the major facilitator superfamily. Sugar transporter (TC 2.A.1.1) family. Mainly expressed in brain and spleen. Also expressed in lung, heart, muscle, liver, kidney, fat, whole blood, testes, ovaries and uterus.

The protein localises to the lysosome membrane. Functionally, probable sugar transporter that acts as a regulator of glycolysis in macrophages. Does not transport glucose. This is Solute carrier family 2, facilitated glucose transporter member 6 from Mus musculus (Mouse).